The following is a 118-amino-acid chain: Large ribosomal subunit protein bL12 (118 aa).

M1 carries the post-translational modification N-acetylmethionine; in form MA2.

Belongs to the bacterial ribosomal protein bL12 family. Homodimer. Part of the ribosomal stalk of the 50S ribosomal subunit. Forms a multimeric L10(L12)X complex, where L10 forms an elongated spine to which 2 to 4 L12 dimers bind in a sequential fashion. Binds GTP-bound translation factors. Acetylation of Met-1 converts MA1 to MA2.

Its function is as follows. Forms part of the ribosomal stalk which helps the ribosome interact with GTP-bound translation factors. Is thus essential for accurate translation. The protein is Large ribosomal subunit protein bL12 of Micrococcus luteus (Micrococcus lysodeikticus).